The sequence spans 419 residues: E3 ubiquitin-protein ligase RNF130 (419 aa).

Positions 1–27 (MSGAARAGPARLAALALLTCSLWPTRA) are cleaved as a signal peptide. The Extracellular portion of the chain corresponds to 28 to 194 (DNASQEYYTA…MPPKNFSRGS (167 aa)). N-linked (GlcNAc...) asparagine glycans are attached at residues asparagine 29, asparagine 40, asparagine 112, asparagine 135, asparagine 172, and asparagine 189. The 72-residue stretch at 105–176 (IALLQRGNCT…SYLEKNISVQ (72 aa)) folds into the PA domain. The helical transmembrane segment at 195-217 (LVFVSISFIVLMIISSAWLIFYF) threads the bilayer. Residues 218 to 419 (IQKIRYTNAR…SLNANEVEWF (202 aa)) are Cytoplasmic-facing. Residues 264–305 (CAVCIESYKQNDVVRVLPCKHVFHKSCVDPWLSEHCTCPMCK) form an RING-type zinc finger.

In terms of tissue distribution, expression is highest in liver, with lesser amounts in the lung, spleen, brain, heart, kidney and testis.

The protein resides in the membrane. Its subcellular location is the cytoplasm. The catalysed reaction is S-ubiquitinyl-[E2 ubiquitin-conjugating enzyme]-L-cysteine + [acceptor protein]-L-lysine = [E2 ubiquitin-conjugating enzyme]-L-cysteine + N(6)-ubiquitinyl-[acceptor protein]-L-lysine.. The protein operates within protein modification; protein ubiquitination. Its function is as follows. Acts as an E3 ubiquitin-protein ligase. May have a role during the programmed cell death of hematopoietic cells. The chain is E3 ubiquitin-protein ligase RNF130 from Mus musculus (Mouse).